The primary structure comprises 514 residues: Maltose/maltodextrin transport system permease protein MalF (514 aa).

At 1–16 (MDVIKKKHWWQSDQLK) the chain is on the cytoplasmic side. The helical transmembrane segment at 17-36 (WSVIGLLGLLVGYLVVLMYV) threads the bilayer. At 37–39 (QGE) the chain is on the periplasmic side. Residues 40–57 (YLFAIMTLILSSAGLYIF) form a helical membrane-spanning segment. The Cytoplasmic portion of the chain corresponds to 58 to 69 (ANRKTYAWRYVY). A helical transmembrane segment spans residues 70–92 (PGLAGMGLFVLFPLVCTIAIAFT). At 93–283 (NYSSTNQLTF…QKPFFAIFVW (191 aa)) the chain is on the periplasmic side. The ABC transmembrane type-1 domain maps to 281–505 (FVWTVVFSVL…LLVGALAIVN (225 aa)). The chain crosses the membrane as a helical span at residues 284-306 (TVVFSVLTVVLTVAVGMVLACLV). Topologically, residues 307–318 (QWEALKGKAIYR) are cytoplasmic. The helical transmembrane segment at 319–341 (VLLILPYAVPSFISILIFKGLFN) threads the bilayer. Residues 342-369 (QSFGEINMMLSALFGIKPAWFSDPNTAR) are Periplasmic-facing. A helical membrane pass occupies residues 370 to 392 (AMVIIVNTWLGYPYMMILCMGLL). Topologically, residues 393-412 (KAIPDDLYEASAMDGAGPFQ) are cytoplasmic. Residues 413–435 (NFFKITLPLLIKPLTPLMIASFA) traverse the membrane as a helical segment. Topologically, residues 436 to 483 (FNFNNFVLIQLLTNGGPDRLGTTTPAGYTDLLVSYTYRIAFEGGGGQD) are periplasmic. A helical membrane pass occupies residues 484–506 (FGLAAAIATLIFLLVGALAIVNL). Residues 507 to 514 (KATRMKFD) lie on the Cytoplasmic side of the membrane.

This sequence belongs to the binding-protein-dependent transport system permease family. MalFG subfamily. In terms of assembly, the complex is composed of two ATP-binding proteins (MalK), two transmembrane proteins (MalG and MalF) and a solute-binding protein (MalE).

The protein localises to the cell inner membrane. Functionally, part of the ABC transporter complex MalEFGK involved in maltose/maltodextrin import. Probably responsible for the translocation of the substrate across the membrane. This chain is Maltose/maltodextrin transport system permease protein MalF (malF), found in Salmonella typhimurium (strain LT2 / SGSC1412 / ATCC 700720).